Here is a 205-residue protein sequence, read N- to C-terminus: Thiamine-phosphate synthase (205 aa).

4-amino-2-methyl-5-(diphosphooxymethyl)pyrimidine contacts are provided by residues 37 to 41 (QVREK) and Asn-69. Mg(2+)-binding residues include Asp-70 and Asp-89. Ser-108 provides a ligand contact to 4-amino-2-methyl-5-(diphosphooxymethyl)pyrimidine. Position 134–136 (134–136 (TGS)) interacts with 2-[(2R,5Z)-2-carboxy-4-methylthiazol-5(2H)-ylidene]ethyl phosphate. Lys-137 contributes to the 4-amino-2-methyl-5-(diphosphooxymethyl)pyrimidine binding site. Residues Gly-165 and 185–186 (IS) contribute to the 2-[(2R,5Z)-2-carboxy-4-methylthiazol-5(2H)-ylidene]ethyl phosphate site.

It belongs to the thiamine-phosphate synthase family. It depends on Mg(2+) as a cofactor.

The enzyme catalyses 2-[(2R,5Z)-2-carboxy-4-methylthiazol-5(2H)-ylidene]ethyl phosphate + 4-amino-2-methyl-5-(diphosphooxymethyl)pyrimidine + 2 H(+) = thiamine phosphate + CO2 + diphosphate. The catalysed reaction is 2-(2-carboxy-4-methylthiazol-5-yl)ethyl phosphate + 4-amino-2-methyl-5-(diphosphooxymethyl)pyrimidine + 2 H(+) = thiamine phosphate + CO2 + diphosphate. It catalyses the reaction 4-methyl-5-(2-phosphooxyethyl)-thiazole + 4-amino-2-methyl-5-(diphosphooxymethyl)pyrimidine + H(+) = thiamine phosphate + diphosphate. The protein operates within cofactor biosynthesis; thiamine diphosphate biosynthesis; thiamine phosphate from 4-amino-2-methyl-5-diphosphomethylpyrimidine and 4-methyl-5-(2-phosphoethyl)-thiazole: step 1/1. In terms of biological role, condenses 4-methyl-5-(beta-hydroxyethyl)thiazole monophosphate (THZ-P) and 2-methyl-4-amino-5-hydroxymethyl pyrimidine pyrophosphate (HMP-PP) to form thiamine monophosphate (TMP). The protein is Thiamine-phosphate synthase of Clostridium botulinum (strain ATCC 19397 / Type A).